The chain runs to 490 residues: Bifunctional protein GlmU (490 aa).

The segment at 1–241 (MSSPGDTAVL…SALVAGVNNR (241 aa)) is pyrophosphorylase. Residues 12 to 15 (LAAG), lysine 26, glutamine 83, 88 to 89 (GT), 112 to 114 (SGD), glycine 151, glutamate 166, asparagine 181, and asparagine 239 contribute to the UDP-N-acetyl-alpha-D-glucosamine site. Aspartate 114 is a Mg(2+) binding site. Position 239 (asparagine 239) interacts with Mg(2+). The linker stretch occupies residues 242–262 (VQLAQLGAELNRRIVAAHQLA). The segment at 263-490 (GVTVVDPATT…AGGRPAGEAE (228 aa)) is N-acetyltransferase. Arginine 344 and lysine 362 together coordinate UDP-N-acetyl-alpha-D-glucosamine. Histidine 374 serves as the catalytic Proton acceptor. Positions 377 and 388 each coordinate UDP-N-acetyl-alpha-D-glucosamine. Acetyl-CoA is bound by residues alanine 391, 397 to 398 (NY), serine 416, and alanine 434. Positions 462 to 490 (RRKRPGSAAARAAEAAEKAAGGRPAGEAE) are disordered. The segment covering 467–490 (GSAAARAAEAAEKAAGGRPAGEAE) has biased composition (low complexity).

It in the N-terminal section; belongs to the N-acetylglucosamine-1-phosphate uridyltransferase family. The protein in the C-terminal section; belongs to the transferase hexapeptide repeat family. As to quaternary structure, homotrimer. The cofactor is Mg(2+).

It is found in the cytoplasm. It carries out the reaction alpha-D-glucosamine 1-phosphate + acetyl-CoA = N-acetyl-alpha-D-glucosamine 1-phosphate + CoA + H(+). The catalysed reaction is N-acetyl-alpha-D-glucosamine 1-phosphate + UTP + H(+) = UDP-N-acetyl-alpha-D-glucosamine + diphosphate. The protein operates within nucleotide-sugar biosynthesis; UDP-N-acetyl-alpha-D-glucosamine biosynthesis; N-acetyl-alpha-D-glucosamine 1-phosphate from alpha-D-glucosamine 6-phosphate (route II): step 2/2. Its pathway is nucleotide-sugar biosynthesis; UDP-N-acetyl-alpha-D-glucosamine biosynthesis; UDP-N-acetyl-alpha-D-glucosamine from N-acetyl-alpha-D-glucosamine 1-phosphate: step 1/1. It participates in bacterial outer membrane biogenesis; LPS lipid A biosynthesis. Functionally, catalyzes the last two sequential reactions in the de novo biosynthetic pathway for UDP-N-acetylglucosamine (UDP-GlcNAc). The C-terminal domain catalyzes the transfer of acetyl group from acetyl coenzyme A to glucosamine-1-phosphate (GlcN-1-P) to produce N-acetylglucosamine-1-phosphate (GlcNAc-1-P), which is converted into UDP-GlcNAc by the transfer of uridine 5-monophosphate (from uridine 5-triphosphate), a reaction catalyzed by the N-terminal domain. The sequence is that of Bifunctional protein GlmU from Mycobacterium avium (strain 104).